A 349-amino-acid chain; its full sequence is Mitogen-activated protein kinase sty1 (349 aa).

The region spanning 20–299 (YSDLQPIGMG…AADALAHNYL (280 aa)) is the Protein kinase domain. ATP-binding positions include 26–34 (IGMGAFGLV) and Lys-49. Asp-141 functions as the Proton acceptor in the catalytic mechanism. Thr-171 carries the phosphothreonine modification. Residues 171 to 173 (TGY) carry the TXY motif. Tyr-173 is subject to Phosphotyrosine. The residue at position 175 (Ser-175) is a Phosphoserine. Position 176 is a phosphothreonine (Thr-176). The TXY motif lies at 176 to 178 (TRY).

This sequence belongs to the protein kinase superfamily. Ser/Thr protein kinase family. MAP kinase subfamily. HOG1 sub-subfamily. Interacts with cdc37, cmk2, hal4, sin1 and srk1. The cofactor is Mg(2+). Post-translationally, dually phosphorylated on Thr-171 and Tyr-173, which activates the enzyme. Phosphorylated by wis1 in response to osmotic stress, nutrient limitation, hydrogen peroxide and arsenite. Dephosphorylated by pyp1 and pyp2.

The protein resides in the cytoplasm. It localises to the nucleus. The catalysed reaction is L-seryl-[protein] + ATP = O-phospho-L-seryl-[protein] + ADP + H(+). The enzyme catalyses L-threonyl-[protein] + ATP = O-phospho-L-threonyl-[protein] + ADP + H(+). With respect to regulation, activated by the MAPK kinase wisl, and negatively regulated by pypl and pyp2 tyrosine phosphatases. Functionally, proline-directed serine/threonine-protein kinase involved in a signal transduction pathway that is activated by changes in the osmolarity of the extracellular environment. Controls osmotic regulation of transcription of target genes. Involved in osmoregulation and stress response pathways leading to an efficient start of sexual differentiation. Supports translation initiation and facilitates adaptation to environmental stress in part through reducing eIF2-alpha phosphorylation. Links the cell-cycle G2/M control with changes in the extracellular environment that affect cell physiology. Phosphorylates atf1 and mkp1. In conjunction with hal4, has a role in the cellular resistance to toxic cations such as Na(+), Li(+) and Ca(2+). Involved in resistance to arsenite, methylglyoxal and hydrogen peroxide. Involved in induction of thermotolerance in mRNA export, as well as in vacuolar fission. The sequence is that of Mitogen-activated protein kinase sty1 (sty1) from Schizosaccharomyces pombe (strain 972 / ATCC 24843) (Fission yeast).